Reading from the N-terminus, the 486-residue chain is Protein nucleotidyltransferase YdiU (486 aa).

ATP-binding residues include Gly90, Gly92, Arg93, Lys113, Asp125, Gly126, Arg176, and Arg183. Asp252 serves as the catalytic Proton acceptor. Positions 253 and 262 each coordinate Mg(2+). Asp262 is a binding site for ATP.

Belongs to the SELO family. Mg(2+) serves as cofactor. Requires Mn(2+) as cofactor.

The catalysed reaction is L-seryl-[protein] + ATP = 3-O-(5'-adenylyl)-L-seryl-[protein] + diphosphate. It catalyses the reaction L-threonyl-[protein] + ATP = 3-O-(5'-adenylyl)-L-threonyl-[protein] + diphosphate. The enzyme catalyses L-tyrosyl-[protein] + ATP = O-(5'-adenylyl)-L-tyrosyl-[protein] + diphosphate. It carries out the reaction L-histidyl-[protein] + UTP = N(tele)-(5'-uridylyl)-L-histidyl-[protein] + diphosphate. The catalysed reaction is L-seryl-[protein] + UTP = O-(5'-uridylyl)-L-seryl-[protein] + diphosphate. It catalyses the reaction L-tyrosyl-[protein] + UTP = O-(5'-uridylyl)-L-tyrosyl-[protein] + diphosphate. Functionally, nucleotidyltransferase involved in the post-translational modification of proteins. It can catalyze the addition of adenosine monophosphate (AMP) or uridine monophosphate (UMP) to a protein, resulting in modifications known as AMPylation and UMPylation. This is Protein nucleotidyltransferase YdiU from Pseudomonas putida (strain W619).